Reading from the N-terminus, the 546-residue chain is Chaperonin GroEL (546 aa).

Residues 29-32 (TMGP), Lys-50, 86-90 (DGTTT), Gly-414, and Asp-492 contribute to the ATP site.

It belongs to the chaperonin (HSP60) family. In terms of assembly, forms a cylinder of 14 subunits composed of two heptameric rings stacked back-to-back. Interacts with the co-chaperonin GroES.

It is found in the cytoplasm. The enzyme catalyses ATP + H2O + a folded polypeptide = ADP + phosphate + an unfolded polypeptide.. Together with its co-chaperonin GroES, plays an essential role in assisting protein folding. The GroEL-GroES system forms a nano-cage that allows encapsulation of the non-native substrate proteins and provides a physical environment optimized to promote and accelerate protein folding. This Helicobacter pylori (strain P12) protein is Chaperonin GroEL.